Consider the following 256-residue polypeptide: Cysteine-rich repeat secretory protein 29 (256 aa).

Positions 1–26 (MSSVFGSVHILAMIAIQLLLIHSVSS) are cleaved as a signal peptide. Gnk2-homologous domains follow at residues 33-136 (YLHH…SVAS) and 142-253 (YEND…LYPF).

Belongs to the cysteine-rich repeat secretory protein family.

It localises to the secreted. The protein is Cysteine-rich repeat secretory protein 29 (CRRSP29) of Arabidopsis thaliana (Mouse-ear cress).